A 90-amino-acid chain; its full sequence is Small ribosomal subunit protein bS16 (90 aa).

It belongs to the bacterial ribosomal protein bS16 family.

The sequence is that of Small ribosomal subunit protein bS16 from Lactobacillus acidophilus (strain ATCC 700396 / NCK56 / N2 / NCFM).